A 367-amino-acid chain; its full sequence is NADH-quinone oxidoreductase subunit D (367 aa).

This sequence belongs to the complex I 49 kDa subunit family. In terms of assembly, NDH-1 is composed of 14 different subunits. Subunits NuoB, C, D, E, F, and G constitute the peripheral sector of the complex.

The protein localises to the cell membrane. It carries out the reaction a quinone + NADH + 5 H(+)(in) = a quinol + NAD(+) + 4 H(+)(out). Functionally, NDH-1 shuttles electrons from NADH, via FMN and iron-sulfur (Fe-S) centers, to quinones in the respiratory chain. The immediate electron acceptor for the enzyme in this species is believed to be ubiquinone. Couples the redox reaction to proton translocation (for every two electrons transferred, four hydrogen ions are translocated across the cytoplasmic membrane), and thus conserves the redox energy in a proton gradient. This Dehalococcoides mccartyi (strain ATCC BAA-2266 / KCTC 15142 / 195) (Dehalococcoides ethenogenes (strain 195)) protein is NADH-quinone oxidoreductase subunit D.